The following is a 79-amino-acid chain: Small ribosomal subunit protein bS16 (79 aa).

Belongs to the bacterial ribosomal protein bS16 family.

In Marinobacter nauticus (strain ATCC 700491 / DSM 11845 / VT8) (Marinobacter aquaeolei), this protein is Small ribosomal subunit protein bS16.